Reading from the N-terminus, the 56-residue chain is Small ribosomal subunit protein uS14 (56 aa).

Zn(2+) is bound by residues Cys21, Cys24, Cys39, and Cys42.

It belongs to the universal ribosomal protein uS14 family. Zinc-binding uS14 subfamily. As to quaternary structure, part of the 30S ribosomal subunit. Zn(2+) serves as cofactor.

Its function is as follows. Binds 16S rRNA, required for the assembly of 30S particles. The chain is Small ribosomal subunit protein uS14 from Thermococcus kodakarensis (strain ATCC BAA-918 / JCM 12380 / KOD1) (Pyrococcus kodakaraensis (strain KOD1)).